The sequence spans 102 residues: Large ribosomal subunit protein bL21 (102 aa).

Belongs to the bacterial ribosomal protein bL21 family. In terms of assembly, part of the 50S ribosomal subunit. Contacts protein L20.

In terms of biological role, this protein binds to 23S rRNA in the presence of protein L20. This is Large ribosomal subunit protein bL21 from Oceanobacillus iheyensis (strain DSM 14371 / CIP 107618 / JCM 11309 / KCTC 3954 / HTE831).